The primary structure comprises 349 residues: Protein Wnt-7b (349 aa).

A signal peptide spans 1 to 24 (MHRNFRKWIFYVFLCFGVIYVKLG). Intrachain disulfides connect cysteine 73-cysteine 84, cysteine 123-cysteine 131, cysteine 133-cysteine 152, cysteine 200-cysteine 214, and cysteine 202-cysteine 209. Residues asparagine 83 and asparagine 127 are each glycosylated (N-linked (GlcNAc...) asparagine). A lipid anchor (O-palmitoleoyl serine; by PORCN) is attached at serine 206. The interval 238–266 (VEVVRASRLRQPTFLKIKQIKSYQKPMET) is disordered linker. 6 cysteine pairs are disulfide-bonded: cysteine 278–cysteine 309, cysteine 294–cysteine 304, cysteine 308–cysteine 348, cysteine 324–cysteine 339, cysteine 326–cysteine 336, and cysteine 331–cysteine 332. N-linked (GlcNAc...) asparagine glycosylation is present at asparagine 295.

Belongs to the Wnt family. In terms of processing, palmitoleoylation is required for efficient binding to frizzled receptors. Depalmitoleoylation leads to Wnt signaling pathway inhibition. In terms of tissue distribution, expressed in differentiating lens fiber cells.

Its subcellular location is the secreted. The protein localises to the extracellular space. It is found in the extracellular matrix. Its function is as follows. Ligand for members of the frizzled family of seven transmembrane receptors that functions in the canonical Wnt/beta-catenin signaling pathway. Required for normal fusion of the chorion and the allantois during placenta development. Required for central nervous system (CNS) angiogenesis and blood-brain barrier regulation. In Gallus gallus (Chicken), this protein is Protein Wnt-7b (WNT7B).